Reading from the N-terminus, the 73-residue chain is Small ribosomal subunit protein bS18 (73 aa).

Belongs to the bacterial ribosomal protein bS18 family. Part of the 30S ribosomal subunit. Forms a tight heterodimer with protein bS6.

Its function is as follows. Binds as a heterodimer with protein bS6 to the central domain of the 16S rRNA, where it helps stabilize the platform of the 30S subunit. This Synechococcus sp. (strain RCC307) protein is Small ribosomal subunit protein bS18.